We begin with the raw amino-acid sequence, 34 residues long: Conotoxin Cl6d (34 aa).

3 disulfide bridges follow: Cys-4–Cys-19, Cys-12–Cys-29, and Cys-18–Cys-33. Pro-14 and Pro-21 each carry 4-hydroxyproline.

As to expression, expressed by the venom duct.

It is found in the secreted. The sequence is that of Conotoxin Cl6d from Californiconus californicus (California cone).